The primary structure comprises 394 residues: SVGFKAGVKDYRLTYYTPEYETLATDILAAFRVTPQPGVPPEEAGAAVAAESSTGTWTTVWTDGLTSLDRYKGRCYHIEPVAGEENQYIAYVAYPLDLFEEGSVTNMFTSIVGNVFGFKALRALRLEDLRIPPAYSKTFQGPPHGIQVERDKLNKYGRPLLGCTIKPKLGLSAKNYGRAVYECLRGGLDFTKDDENVNSQPFMRWRDRFLFCTEAIYKAQAETGEIKGHYLNATAGTSEEMIKRAVCARELGVPIVMHDYLTGGFTANTSLAHYCRDNGLLLHIHRAMHAVIDRQRNHGIHFRVLAKALRMSGGDHIHSGTVVGKLEGERDVTLGFVDLLRDDFIEKDRSRGIYFTQDWVSMPGVLPVASGGIHVWHMPALTEIFGDDSVLQFG.

The residue at position 5 (K5) is an N6,N6,N6-trimethyllysine. Substrate contacts are provided by N114 and T164. The active-site Proton acceptor is K166. K168 lines the substrate pocket. Mg(2+) contacts are provided by K192, D194, and E195. K192 carries the N6-carboxylysine modification. The active-site Proton acceptor is the H285. Substrate is bound by residues R286, H318, and S370.

The protein belongs to the RuBisCO large chain family. Type I subfamily. In terms of assembly, heterohexadecamer of 8 large chains and 8 small chains. Mg(2+) serves as cofactor.

Its subcellular location is the plastid. The protein localises to the chloroplast. The catalysed reaction is 2 (2R)-3-phosphoglycerate + 2 H(+) = D-ribulose 1,5-bisphosphate + CO2 + H2O. The enzyme catalyses D-ribulose 1,5-bisphosphate + O2 = 2-phosphoglycolate + (2R)-3-phosphoglycerate + 2 H(+). RuBisCO catalyzes two reactions: the carboxylation of D-ribulose 1,5-bisphosphate, the primary event in carbon dioxide fixation, as well as the oxidative fragmentation of the pentose substrate in the photorespiration process. Both reactions occur simultaneously and in competition at the same active site. The chain is Ribulose bisphosphate carboxylase large chain (rbcL) from Euryale ferox (Gorgon plant).